Reading from the N-terminus, the 430-residue chain is GTPase Obg (430 aa).

In terms of domain architecture, Obg spans 1 to 158 (MFIDTAKVFV…LNIVLELKLL (158 aa)). An OBG-type G domain is found at 159-331 (ADVGLLGFPN…VMKEAARILK (173 aa)). GTP is bound by residues 165 to 172 (GFPNVGKS), 190 to 194 (FTTLK), 212 to 215 (DIPG), 282 to 285 (NKSD), and 312 to 314 (SAA). Residues Ser-172 and Thr-192 each coordinate Mg(2+). The 86-residue stretch at 345–430 (MYIPEEKRFT…LNDFEFEYIL (86 aa)) folds into the OCT domain.

This sequence belongs to the TRAFAC class OBG-HflX-like GTPase superfamily. OBG GTPase family. As to quaternary structure, monomer. Requires Mg(2+) as cofactor.

Its subcellular location is the cytoplasm. In terms of biological role, an essential GTPase which binds GTP, GDP and possibly (p)ppGpp with moderate affinity, with high nucleotide exchange rates and a fairly low GTP hydrolysis rate. Plays a role in control of the cell cycle, stress response, ribosome biogenesis and in those bacteria that undergo differentiation, in morphogenesis control. In Clostridium beijerinckii (strain ATCC 51743 / NCIMB 8052) (Clostridium acetobutylicum), this protein is GTPase Obg.